The following is a 926-amino-acid chain: Protein transport protein SEC24-2 (926 aa).

The segment at 1 to 54 (MSHHKKRVYPQAQAQYGQSATPLQQPAQLVPPQDPAAAGMSYAQMGMPPQGAAA) is disordered. Residues 20–54 (ATPLQQPAQLVPPQDPAAAGMSYAQMGMPPQGAAA) show a composition bias toward low complexity. Zn(2+) is bound by residues C231, C234, C253, and C256. Residues 231–256 (CRRCRSYMNPFITFIEQGRRWRCNFC) are zinc finger-like.

Belongs to the SEC23/SEC24 family. SEC24 subfamily. The COPII coat is composed of at least 5 proteins: the SEC23/24 complex, the SEC13/31 complex, and the protein SAR1. Golgi apparatus membrane; Peripheral membrane protein; Cytoplasmic side.

The protein localises to the cytoplasm. Its subcellular location is the cytoplasmic vesicle. It localises to the COPII-coated vesicle membrane. The protein resides in the endoplasmic reticulum membrane. It is found in the golgi apparatus membrane. In terms of biological role, component of the coat protein complex II (COPII) which promotes the formation of transport vesicles from the endoplasmic reticulum (ER). The coat has two main functions, the physical deformation of the endoplasmic reticulum membrane into vesicles and the selection of cargo molecules. This Saccharomyces uvarum (strain ATCC 76518 / CBS 7001 / CLIB 283 / NBRC 10550 / MCYC 623 / NCYC 2669 / NRRL Y-11845) (Yeast) protein is Protein transport protein SEC24-2 (SEC242).